The following is a 321-amino-acid chain: Large ribosomal subunit protein uL3 (321 aa).

The protein belongs to the universal ribosomal protein uL3 family. As to quaternary structure, part of the 50S ribosomal subunit. Forms a cluster with proteins L14 and L24e.

One of the primary rRNA binding proteins, it binds directly near the 3'-end of the 23S rRNA, where it nucleates assembly of the 50S subunit. The sequence is that of Large ribosomal subunit protein uL3 from Nanoarchaeum equitans (strain Kin4-M).